The chain runs to 158 residues: NADH-quinone oxidoreductase subunit B (158 aa).

Positions 37, 38, 102, and 132 each coordinate [4Fe-4S] cluster.

The protein belongs to the complex I 20 kDa subunit family. As to quaternary structure, NDH-1 is composed of 14 different subunits. Subunits NuoB, C, D, E, F, and G constitute the peripheral sector of the complex. [4Fe-4S] cluster serves as cofactor.

Its subcellular location is the cell inner membrane. The enzyme catalyses a quinone + NADH + 5 H(+)(in) = a quinol + NAD(+) + 4 H(+)(out). Functionally, NDH-1 shuttles electrons from NADH, via FMN and iron-sulfur (Fe-S) centers, to quinones in the respiratory chain. Couples the redox reaction to proton translocation (for every two electrons transferred, four hydrogen ions are translocated across the cytoplasmic membrane), and thus conserves the redox energy in a proton gradient. The chain is NADH-quinone oxidoreductase subunit B from Aromatoleum aromaticum (strain DSM 19018 / LMG 30748 / EbN1) (Azoarcus sp. (strain EbN1)).